Consider the following 100-residue polypeptide: Integration host factor subunit alpha (100 aa).

It belongs to the bacterial histone-like protein family. As to quaternary structure, heterodimer of an alpha and a beta chain.

Its function is as follows. This protein is one of the two subunits of integration host factor, a specific DNA-binding protein that functions in genetic recombination as well as in transcriptional and translational control. The polypeptide is Integration host factor subunit alpha (Hahella chejuensis (strain KCTC 2396)).